A 466-amino-acid polypeptide reads, in one-letter code: Histidine--tRNA ligase (466 aa).

This sequence belongs to the class-II aminoacyl-tRNA synthetase family. As to quaternary structure, homodimer.

Its subcellular location is the cytoplasm. It carries out the reaction tRNA(His) + L-histidine + ATP = L-histidyl-tRNA(His) + AMP + diphosphate + H(+). This is Histidine--tRNA ligase from Xylella fastidiosa (strain M23).